The primary structure comprises 345 residues: Meiotically up-regulated gene 97 protein (345 aa).

Transmembrane regions (helical) follow at residues 292 to 312 (MWVLSLLLFSAGGSVLIGLWM) and 319 to 329 (FAHGMLLNLGI).

It is found in the membrane. In terms of biological role, required for correct meiotic chromosome segregation. Appears to also have role in sporulation. The polypeptide is Meiotically up-regulated gene 97 protein (mug97) (Schizosaccharomyces pombe (strain 972 / ATCC 24843) (Fission yeast)).